A 525-amino-acid polypeptide reads, in one-letter code: Allantoate deiminase (525 aa).

A signal peptide spans 1 to 53 (MAVPHPSSSSSRSHPFLSHVYHTSFHHHHHHNHPSLVLFWCLVFSLLSPLALS). Low complexity predominate over residues 56-75 (SSSSSSSSDSSSSSSSHISL). The disordered stretch occupies residues 56–78 (SSSSSSSSDSSSSSSSHISLGIG). The N-linked (GlcNAc...) asparagine glycan is linked to Asn156. His167, Asp178, Glu215, His281, and His499 together coordinate Mn(2+).

This sequence belongs to the peptidase M20A family. As to quaternary structure, homodimer. The cofactor is Mn(2+). As to expression, expressed in seedlings, roots, stems, leaves, flowers, siliques and seeds.

It is found in the endoplasmic reticulum. It carries out the reaction allantoate + H2O + 2 H(+) = (S)-2-ureidoglycine + NH4(+) + CO2. Its activity is regulated as follows. Inhibited by borate, fluoride, L-Asn and L-Asp, but not by phenylphosphorodiamidate. Functionally, involved in the catabolism of purine nucleotides. Can use allantoate as substrate, but not Nalpha-carbamoyl-L-Asp, Nalpha-carbamoyl-L-Ala or Nalpha-carbamoyl-Gly. The sequential activity of AAH, UGLYAH and UAH allows a complete purine breakdown without the intermediate generation of urea. Involved in the regulation of seed maturation and seed dormancy. This chain is Allantoate deiminase, found in Arabidopsis thaliana (Mouse-ear cress).